The primary structure comprises 98 residues: U11-barytoxin-Tl1b (98 aa).

A signal peptide spans 1 to 21 (MKTLVLVAVLGLASLYLLSYA). Residues 22-50 (SEVQQLSRDEEEFRALVASFGGLFDTEER) constitute a propeptide that is removed on maturation. 3 cysteine pairs are disulfide-bonded: cysteine 57-cysteine 71, cysteine 64-cysteine 76, and cysteine 70-cysteine 89.

It belongs to the neurotoxin 10 (Hwtx-1) family. 25 (ICK4) subfamily. As to expression, expressed by the venom gland.

It is found in the secreted. Ion channel inhibitor. The sequence is that of U11-barytoxin-Tl1b from Trittame loki (Brush-footed trapdoor spider).